A 231-amino-acid chain; its full sequence is MNADDQKKAAAVRALEFVKPGMKLGMGTGSTAEHFVRALGEKVKAGLDIVGVPTSERTAKLAASLGIPLTNLDDTPHLDITVDGADELDGKLRLIKGGGGALLREKIVATASDRMIVIADASKLVKTLGSFPLPVEVIPFGSAVTARKIAEVASAHGCTGKMSRRADEYGEPFFTDSENFIYDCAFGSIPDPDGLSAALNRIPGVVDNGLFIGIAAMAIVGTDKGTDIIEA.

Substrate-binding positions include 28 to 31 (TGST), 83 to 86 (DGAD), and 96 to 99 (KGGG). Glutamate 105 (proton acceptor) is an active-site residue. Lysine 123 serves as a coordination point for substrate.

This sequence belongs to the ribose 5-phosphate isomerase family. In terms of assembly, homodimer.

It catalyses the reaction aldehydo-D-ribose 5-phosphate = D-ribulose 5-phosphate. Its pathway is carbohydrate degradation; pentose phosphate pathway; D-ribose 5-phosphate from D-ribulose 5-phosphate (non-oxidative stage): step 1/1. Catalyzes the reversible conversion of ribose-5-phosphate to ribulose 5-phosphate. The sequence is that of Ribose-5-phosphate isomerase A from Parvibaculum lavamentivorans (strain DS-1 / DSM 13023 / NCIMB 13966).